Consider the following 335-residue polypeptide: Acetyl-coenzyme A carboxylase carboxyl transferase subunit alpha (335 aa).

Residues 48–308 form the CoA carboxyltransferase C-terminal domain; that stretch reads TLEKKVEALR…KGILIEELSA (261 aa).

It belongs to the AccA family. As to quaternary structure, acetyl-CoA carboxylase is a heterohexamer composed of biotin carboxyl carrier protein (AccB), biotin carboxylase (AccC) and two subunits each of ACCase subunit alpha (AccA) and ACCase subunit beta (AccD).

The protein resides in the cytoplasm. It carries out the reaction N(6)-carboxybiotinyl-L-lysyl-[protein] + acetyl-CoA = N(6)-biotinyl-L-lysyl-[protein] + malonyl-CoA. It functions in the pathway lipid metabolism; malonyl-CoA biosynthesis; malonyl-CoA from acetyl-CoA: step 1/1. Functionally, component of the acetyl coenzyme A carboxylase (ACC) complex. First, biotin carboxylase catalyzes the carboxylation of biotin on its carrier protein (BCCP) and then the CO(2) group is transferred by the carboxyltransferase to acetyl-CoA to form malonyl-CoA. This is Acetyl-coenzyme A carboxylase carboxyl transferase subunit alpha from Chlorobium phaeovibrioides (strain DSM 265 / 1930) (Prosthecochloris vibrioformis (strain DSM 265)).